The following is a 300-amino-acid chain: F-box/LRR-repeat protein 15 (300 aa).

Methionine 1 is subject to N-acetylmethionine. An F-box domain is found at 19–66 (FLDLPWEDVLLPHVLNRVPLRQLLRLQRVSRAFRSLVQLHLAGLRRFD). Residues 113-269 (NPQLRSVALG…ESSLSRLRKR (157 aa)) are interaction with SMURF1. 5 LRR repeats span residues 141 to 162 (RLQR…RGLA), 167 to 188 (ALEE…VYLA), 194 to 215 (GLRS…QELA), 220 to 241 (ELHH…RTLA), and 246 to 267 (VLRS…SRLR).

Belongs to the FBXL15 family. As to quaternary structure, part of the SCF (SKP1-CUL1-F-box) E3 ubiquitin-protein ligase complex SCF(FBXL15) composed of CUL1, SKP1, RBX1 and FBXL15.

It is found in the cytoplasm. The protein operates within protein modification; protein ubiquitination. Functionally, substrate recognition component of a SCF (SKP1-CUL1-F-box protein) E3 ubiquitin-protein ligase complex which mediates the ubiquitination and subsequent proteasomal degradation of SMURF1, thereby acting as a positive regulator of the BMP signaling pathway. Required for dorsal/ventral pattern formation and bone mass maintenance. Also mediates ubiquitination of SMURF2 and WWP2. This chain is F-box/LRR-repeat protein 15 (FBXL15), found in Homo sapiens (Human).